Here is a 212-residue protein sequence, read N- to C-terminus: Adenylate kinase (212 aa).

An ATP-binding site is contributed by 10 to 15 (GAGKGT). The segment at 30–59 (AIGDIFRTIIKTSTSEAELINNYVKQGELI) is NMP. AMP is bound by residues arginine 36, 57–59 (ELI), 85–88 (GYPR), and glutamine 92. Residues 122–160 (GRYSCKNCGKIYNRYFVQPKTDNVCDVCGSSTFDYRKDD) are LID. Arginine 123 is an ATP binding site. 2 residues coordinate Zn(2+): cysteine 126 and cysteine 129. An ATP-binding site is contributed by 132-133 (IY). The Zn(2+) site is built by cysteine 146 and cysteine 149. Arginine 157 and arginine 168 together coordinate AMP. ATP is bound at residue lysine 196.

It belongs to the adenylate kinase family. As to quaternary structure, monomer.

It localises to the cytoplasm. The catalysed reaction is AMP + ATP = 2 ADP. Its pathway is purine metabolism; AMP biosynthesis via salvage pathway; AMP from ADP: step 1/1. Its function is as follows. Catalyzes the reversible transfer of the terminal phosphate group between ATP and AMP. Plays an important role in cellular energy homeostasis and in adenine nucleotide metabolism. The protein is Adenylate kinase of Rickettsia conorii (strain ATCC VR-613 / Malish 7).